Here is a 463-residue protein sequence, read N- to C-terminus: ATP synthase subunit beta (463 aa).

Residue 153–160 (GGAGVGKT) coordinates ATP.

The protein belongs to the ATPase alpha/beta chains family. F-type ATPases have 2 components, CF(1) - the catalytic core - and CF(0) - the membrane proton channel. CF(1) has five subunits: alpha(3), beta(3), gamma(1), delta(1), epsilon(1). CF(0) has three main subunits: a(1), b(2) and c(9-12). The alpha and beta chains form an alternating ring which encloses part of the gamma chain. CF(1) is attached to CF(0) by a central stalk formed by the gamma and epsilon chains, while a peripheral stalk is formed by the delta and b chains.

The protein resides in the cell inner membrane. The enzyme catalyses ATP + H2O + 4 H(+)(in) = ADP + phosphate + 5 H(+)(out). Produces ATP from ADP in the presence of a proton gradient across the membrane. The catalytic sites are hosted primarily by the beta subunits. This chain is ATP synthase subunit beta, found in Burkholderia cepacia (Pseudomonas cepacia).